The following is a 260-amino-acid chain: Type III pantothenate kinase (260 aa).

6-13 contacts ATP; it reads DCGNTNTV. 107–110 contacts substrate; that stretch reads GPDR. Aspartate 109 functions as the Proton acceptor in the catalytic mechanism. Residue aspartate 129 participates in K(+) binding. Residue threonine 132 coordinates ATP. A substrate-binding site is contributed by threonine 184.

The protein belongs to the type III pantothenate kinase family. In terms of assembly, homodimer. Requires NH4(+) as cofactor. K(+) is required as a cofactor.

The protein resides in the cytoplasm. The catalysed reaction is (R)-pantothenate + ATP = (R)-4'-phosphopantothenate + ADP + H(+). Its pathway is cofactor biosynthesis; coenzyme A biosynthesis; CoA from (R)-pantothenate: step 1/5. Functionally, catalyzes the phosphorylation of pantothenate (Pan), the first step in CoA biosynthesis. This Ruegeria sp. (strain TM1040) (Silicibacter sp.) protein is Type III pantothenate kinase.